Reading from the N-terminus, the 417-residue chain is D-amino acid dehydrogenase (417 aa).

Position 3 to 17 (3 to 17 (VVILGSGVVGVSTAW)) interacts with FAD.

The protein belongs to the DadA oxidoreductase family. FAD is required as a cofactor.

It carries out the reaction a D-alpha-amino acid + A + H2O = a 2-oxocarboxylate + AH2 + NH4(+). It participates in amino-acid degradation; D-alanine degradation; NH(3) and pyruvate from D-alanine: step 1/1. Its function is as follows. Oxidative deamination of D-amino acids. In Pectobacterium atrosepticum (strain SCRI 1043 / ATCC BAA-672) (Erwinia carotovora subsp. atroseptica), this protein is D-amino acid dehydrogenase.